The chain runs to 310 residues: Thioredoxin reductase (310 aa).

34–41 (NGIQPGGQ) contacts FAD. The cysteines at positions 135 and 138 are disulfide-linked. Position 281-290 (281-290 (DVQDKIYRQA)) interacts with FAD.

Belongs to the class-II pyridine nucleotide-disulfide oxidoreductase family. In terms of assembly, homodimer. Requires FAD as cofactor.

The protein localises to the cytoplasm. It catalyses the reaction [thioredoxin]-dithiol + NADP(+) = [thioredoxin]-disulfide + NADPH + H(+). The chain is Thioredoxin reductase (trxB) from Rickettsia bellii (strain RML369-C).